Consider the following 167-residue polypeptide: Lipoprotein signal peptidase (167 aa).

Transmembrane regions (helical) follow at residues 7–27 (LFLL…KYWV), 61–81 (FSHW…LWLW), and 87–107 (NKFL…GNLI). Active-site residues include Asp117 and Asp136. The helical transmembrane segment at 126–146 (IFYFAIFNLADSFITLGVIVI) threads the bilayer.

This sequence belongs to the peptidase A8 family.

Its subcellular location is the cell inner membrane. The enzyme catalyses Release of signal peptides from bacterial membrane prolipoproteins. Hydrolyzes -Xaa-Yaa-Zaa-|-(S,diacylglyceryl)Cys-, in which Xaa is hydrophobic (preferably Leu), and Yaa (Ala or Ser) and Zaa (Gly or Ala) have small, neutral side chains.. The protein operates within protein modification; lipoprotein biosynthesis (signal peptide cleavage). Functionally, this protein specifically catalyzes the removal of signal peptides from prolipoproteins. The protein is Lipoprotein signal peptidase of Bartonella tribocorum (strain CIP 105476 / IBS 506).